Here is a 78-residue protein sequence, read N- to C-terminus: Omega-conotoxin-like VnMKLT1-0111 (78 aa).

A signal peptide spans 1-22 (MKLTCMMIVAVLFLTAWTFVTA). Positions 23–48 (DSRNGLEYLFPKAHYEMNPEASKLNK) are excised as a propeptide. 3 disulfides stabilise this stretch: C52–C69, C59–C73, and C68–C77.

Belongs to the conotoxin O1 superfamily. In terms of tissue distribution, expressed by the venom duct.

It is found in the secreted. Omega-conotoxins act at presynaptic membranes, they bind and block voltage-gated calcium channels (Cav). The chain is Omega-conotoxin-like VnMKLT1-0111 from Conus ventricosus (Mediterranean cone).